The following is a 146-amino-acid chain: NADH-quinone oxidoreductase subunit A (146 aa).

Helical transmembrane passes span 14–34, 66–86, and 96–116; these read FAVF…GAFF, FYLV…LYAW, and VGFI…VYLV.

The protein belongs to the complex I subunit 3 family. NDH-1 is composed of 13 different subunits. Subunits NuoA, H, J, K, L, M, N constitute the membrane sector of the complex.

It is found in the cell inner membrane. It catalyses the reaction a quinone + NADH + 5 H(+)(in) = a quinol + NAD(+) + 4 H(+)(out). Its function is as follows. NDH-1 shuttles electrons from NADH, via FMN and iron-sulfur (Fe-S) centers, to quinones in the respiratory chain. The immediate electron acceptor for the enzyme in this species is believed to be ubiquinone. Couples the redox reaction to proton translocation (for every two electrons transferred, four hydrogen ions are translocated across the cytoplasmic membrane), and thus conserves the redox energy in a proton gradient. In Serratia proteamaculans (strain 568), this protein is NADH-quinone oxidoreductase subunit A.